The following is a 380-amino-acid chain: Carbamoyl phosphate synthase small chain (380 aa).

Residues 1–187 (MTTSTRGAAK…VVPAIGAKRF (187 aa)) form a CPSase region. Residues serine 55, glycine 236, and glycine 238 each contribute to the L-glutamine site. The Glutamine amidotransferase type-1 domain maps to 188-380 (TVAAVDLGIK…FVSLMEGQRA (193 aa)). The Nucleophile role is filled by cysteine 264. Residues phenylalanine 265, glutamine 268, asparagine 306, glycine 308, and phenylalanine 309 each contribute to the L-glutamine site. Catalysis depends on residues histidine 354 and glutamate 356.

The protein belongs to the CarA family. Composed of two chains; the small (or glutamine) chain promotes the hydrolysis of glutamine to ammonia, which is used by the large (or ammonia) chain to synthesize carbamoyl phosphate. Tetramer of heterodimers (alpha,beta)4.

It carries out the reaction hydrogencarbonate + L-glutamine + 2 ATP + H2O = carbamoyl phosphate + L-glutamate + 2 ADP + phosphate + 2 H(+). The catalysed reaction is L-glutamine + H2O = L-glutamate + NH4(+). The protein operates within amino-acid biosynthesis; L-arginine biosynthesis; carbamoyl phosphate from bicarbonate: step 1/1. Its pathway is pyrimidine metabolism; UMP biosynthesis via de novo pathway; (S)-dihydroorotate from bicarbonate: step 1/3. Small subunit of the glutamine-dependent carbamoyl phosphate synthetase (CPSase). CPSase catalyzes the formation of carbamoyl phosphate from the ammonia moiety of glutamine, carbonate, and phosphate donated by ATP, constituting the first step of 2 biosynthetic pathways, one leading to arginine and/or urea and the other to pyrimidine nucleotides. The small subunit (glutamine amidotransferase) binds and cleaves glutamine to supply the large subunit with the substrate ammonia. The chain is Carbamoyl phosphate synthase small chain from Streptomyces avermitilis (strain ATCC 31267 / DSM 46492 / JCM 5070 / NBRC 14893 / NCIMB 12804 / NRRL 8165 / MA-4680).